A 794-amino-acid chain; its full sequence is Protein transport protein SEC23 G (794 aa).

The Zn(2+) site is built by cysteine 56, cysteine 59, cysteine 78, and cysteine 81. A zinc finger-like region spans residues 56–81 (CSRCGAVLNPYARVDYQSRIWSCPFC).

Belongs to the SEC23/SEC24 family. SEC23 subfamily. As to quaternary structure, component of the coat protein complex II (COPII), composed of at least five proteins: the Sec23/24 complex, the Sec13/31 complex and Sar1. Interacts with SEC24A.

It localises to the cytoplasmic vesicle. The protein resides in the COPII-coated vesicle membrane. It is found in the endoplasmic reticulum membrane. The protein localises to the membrane. Its function is as follows. Component of the coat protein complex II (COPII) which promotes the formation of transport vesicles from the endoplasmic reticulum (ER). The coat has two main functions, the physical deformation of the endoplasmic reticulum membrane into vesicles and the selection of cargo molecules. This Arabidopsis thaliana (Mouse-ear cress) protein is Protein transport protein SEC23 G.